We begin with the raw amino-acid sequence, 353 residues long: Hydrazine synthase subunit gamma (353 aa).

A signal peptide spans 1–39 (MAREMRLGGKERMKTGVVKIGLVAALGVVGLISAGGVYA). Positions 102, 105, and 106 each coordinate heme c. Asp-118, Leu-119, Glu-122, Gly-123, Ser-126, Asn-129, Leu-139, and Pro-141 together coordinate Ca(2+). The heme c site is built by Cys-165, Cys-225, Cys-228, and His-229. A Cytochrome c domain is found at 209 to 353 (EAQKRGQKIF…QDLVEYLKAL (145 aa)). Ca(2+) contacts are provided by Asp-296, Ser-306, Gly-307, and Thr-308. A heme c-binding site is contributed by His-332.

Part of the hydrazine synthase complex that forms an elongated dimer of heterotrimers composed of one alpha, one beta and one gamma subunit. Heme c is required as a cofactor.

It localises to the anammoxosome. The enzyme catalyses hydrazine + 3 Fe(III)-[cytochrome c] + H2O = nitric oxide + 3 Fe(II)-[cytochrome c] + NH4(+) + 2 H(+). It participates in nitrogen metabolism. Component of the hydrazine synthase complex that catalyzes the condensation of nitric oxide (NO) with ammonium to form hydrazine. The gamma subunit catalyzes the first half-reaction, i.e. the three-electron reduction of nitric oxide to hydroxylamine; it may obtain electrons from the triheme cytochrome c kuste2854. Is involved in anaerobic ammonium oxidation (anammox), a biological process in which nitrite is used as the electron acceptor in the conversion of ammonium to dinitrogen gas (N2) and water; this bacterial process has a major role in the Earth's nitrogen cycle and has been estimated to synthesize up to 50% of the dinitrogen gas emitted into our atmosphere from the oceans. This Kuenenia stuttgartiensis protein is Hydrazine synthase subunit gamma.